The following is a 334-amino-acid chain: MSTKNFRVSDGDWICPDKKCGNVNFARRTSCNRCGREKTTEAKMMKAGGTEIGKTLAEKSRGLFSANDWQCKTCGNVNWARRSECNMCNTPKYAKLEERTGYGGGFNERENVEYIEREESDGEYDEFGRKKKKYRGKPVGPASILKEVEDKESEGEDEEDEDGDLSKYKLDEDEDEDDADLSKYNLDASEEEDTNKKKKSNRRSRSKSRSSHSRSSSRSSSHSSSRSRSRSHSRSSSSSRSRSRSSSREHSRSRGSKSRSSSRSYRGSSTPRKRSYSSSRSSSSPERSKKRSRSRSSSSGDRKKRRSRSRSPERRRRSSSGSSHSGSRTSSKKK.

RanBP2-type zinc fingers lie at residues 9–40 and 65–94; these read SDGD…EKTT and SAND…PKYA. The tract at residues 117–334 is disordered; sequence REESDGEYDE…SGSRTSSKKK (218 aa). Residues 150 to 163 are compositionally biased toward acidic residues; sequence DKESEGEDEEDEDG. Positions 196–212 are enriched in basic residues; that stretch reads KKKKSNRRSRSKSRSSH. 2 stretches are compositionally biased toward low complexity: residues 213-224 and 258-285; these read SRSSSRSSSHSS and SRSS…SSSP. Residues 302–318 show a composition bias toward basic residues; the sequence is RKKRRSRSRSPERRRRS. The span at 319 to 334 shows a compositional bias: low complexity; it reads SSGSSHSGSRTSSKKK.

It belongs to the ZRANB2 family.

The protein localises to the nucleus. Its function is as follows. May regulate alternative splicing by interfering with constitutive 5'-splice site selection. This is Zinc finger Ran-binding domain-containing protein 2 from Gallus gallus (Chicken).